Here is a 636-residue protein sequence, read N- to C-terminus: Endoglucanase 4 (636 aa).

The N-terminal stretch at 1-25 (MTRRWSFLVQCFTFKKKEGVRSRYM) is a signal peptide. Asp82 (nucleophile) is an active-site residue. Residues His400, Asp438, and Glu447 contribute to the active site. The CBM3 domain occupies 478-635 (KVEDEFFVEA…GDLVFGTLPN (158 aa)).

It belongs to the glycosyl hydrolase 9 (cellulase E) family.

The protein localises to the secreted. The catalysed reaction is Endohydrolysis of (1-&gt;4)-beta-D-glucosidic linkages in cellulose, lichenin and cereal beta-D-glucans.. The chain is Endoglucanase 4 from Bacillus sp. (strain KSM-522).